Consider the following 207-residue polypeptide: Large ribosomal subunit protein uL4 (207 aa).

Residues R45–V89 form a disordered region. Residues G60–G71 show a composition bias toward basic residues.

Belongs to the universal ribosomal protein uL4 family. As to quaternary structure, part of the 50S ribosomal subunit.

One of the primary rRNA binding proteins, this protein initially binds near the 5'-end of the 23S rRNA. It is important during the early stages of 50S assembly. It makes multiple contacts with different domains of the 23S rRNA in the assembled 50S subunit and ribosome. Functionally, forms part of the polypeptide exit tunnel. This Bacillus anthracis (strain A0248) protein is Large ribosomal subunit protein uL4.